A 3046-amino-acid chain; its full sequence is Nucleosome-remodeling factor subunit BPTF (3046 aa).

Residues 1–232 (MRGRRGRPPK…DIPPLEFPKS (232 aa)) form a disordered region. Residues 22–33 (PAPPPPPPPPTS) are compositionally biased toward pro residues. Positions 62 to 72 (TRLSSPRGGSS) are enriched in low complexity. The segment covering 78–87 (PPPPPAPPST) has biased composition (pro residues). Gly residues predominate over residues 91–110 (GRGGRGGGGGRTGGGGGGGH). Positions 129 to 186 (HESEEEEEEEDMVSEEEEEEDGDAEETQDSEDDEEDEMEEDDDDSDYPEEMEDDDDDA) are enriched in acidic residues. Residues 190 to 203 (TESSFRSHSTYSST) show a composition bias toward low complexity. Residues 205 to 215 (GRRKPRVHRPR) show a composition bias toward basic residues. Ser-216 bears the Phosphoserine mark. Residues 240-300 (NEHIMNVIAI…LKAVLREEDT (61 aa)) form the DDT domain. The PHD-type 1 zinc-finger motif lies at 390-437 (DDHCRVCHKLGDLLCCETCSAVYHLECVKPPLEEVPEDEWQCEVCVAH). Composition is skewed to basic and acidic residues over residues 567–609 (IDNV…SDDK) and 616–628 (EQGK…EVGD). Positions 567-774 (IDNVKSPEET…GAGKGASGST (208 aa)) are disordered. The residue at position 572 (Ser-572) is a Phosphoserine. Positions 574 to 604 (EETEKDKNETENDSKDAEKNREEFEDQSLEK) form a coiled coil. Polar residues-rich tracts occupy residues 631-653 (NSVS…SPSE) and 690-705 (TCES…SIQP). The tract at residues 640-749 (NTTNATSEET…PVSIQEEIVG (110 aa)) is interaction with KEAP1. A compositionally biased stretch (low complexity) spans 706–723 (NLENSNSSSELNSSQSES). The span at 725 to 738 (KAADDPENGERESH) shows a compositional bias: basic and acidic residues. Residues Ser-763 and Ser-817 each carry the phosphoserine modification. The segment at 839–921 (YFKLGQEGKY…QLENNIPSSF (83 aa)) is interaction with MAZ. Residue Lys-880 is modified to N6-acetyllysine. A coiled-coil region spans residues 978 to 1007 (MTSIEREEKEKVKKKEKKQEEEETMQQATW). Residues 1057 to 1157 (YRKSLEGTKN…MKTESHVNCQ (101 aa)) form a disordered region. Thr-1064 carries the phosphothreonine modification. Composition is skewed to basic and acidic residues over residues 1087 to 1102 (IKIE…KGSD) and 1113 to 1152 (DISK…KTES). Residues Lys-1088, Lys-1138, and Lys-1209 each participate in a glycyl lysine isopeptide (Lys-Gly) (interchain with G-Cter in SUMO2) cross-link. Disordered regions lie at residues 1215 to 1339 (KGIG…GNDF), 1371 to 1448 (IVSS…FRTR), 1465 to 1537 (GEST…NGKD), and 1605 to 1706 (NSSE…GESK). Composition is skewed to polar residues over residues 1220–1232 (TSTN…SESP), 1242–1257 (QSDS…ANND), and 1266–1285 (CSES…TTNK). Ser-1231 is modified (phosphoserine). The segment covering 1287–1305 (YPKDRVLDDVSIRSPETKC) has biased composition (basic and acidic residues). Ser-1300 is subject to Phosphoserine. Thr-1303 is modified (phosphothreonine). The residue at position 1310 (Ser-1310) is a Phosphoserine. Over residues 1372 to 1386 (VSSSKSALHSSVPKS) the composition is skewed to low complexity. 2 stretches are compositionally biased toward polar residues: residues 1409–1426 (SESN…SIQD) and 1434–1444 (VQNSNESISEQ). Over residues 1491–1525 (KKLEERPVNKCSDQIKLKNTTDKKNNENRESEKKG) the composition is skewed to basic and acidic residues. Residues 1629–1656 (TLPSTKESDSTQTTTPSASCPESNSVNQ) show a composition bias toward polar residues. Lys-1730 participates in a covalent cross-link: Glycyl lysine isopeptide (Lys-Gly) (interchain with G-Cter in SUMO2). 2 disordered regions span residues 1973–2003 (VPET…TPKQ) and 2041–2070 (QAKK…STIS). Residues 2022–2050 (EIRAFAERVEKEKAQAVEQQAKKRLEQQK) adopt a coiled-coil conformation. The segment covering 2054–2070 (IATSTTSPTSSTTSTIS) has biased composition (low complexity). Position 2098 is a phosphoserine (Ser-2098). The residue at position 2155 (Arg-2155) is an Omega-N-methylarginine. The segment at 2160-2180 (TIRPNTSGSGGTTSNSQVITG) is disordered. Arg-2162, Arg-2184, and Arg-2191 each carry asymmetric dimethylarginine. The span at 2232 to 2256 (VSAPNTVSSTPGQKSLTSATSTSNI) shows a compositional bias: polar residues. Disordered regions lie at residues 2232 to 2270 (VSAP…QQGQ), 2346 to 2549 (TAST…RPQL), 2714 to 2733 (QAAK…SKQN), and 2795 to 2858 (PCPP…ISTT). Low complexity-rich tracts occupy residues 2257–2270 (QSSA…QQGQ) and 2346–2362 (TAST…AGTG). The span at 2363–2375 (EQRQSKLSPQMQV) shows a compositional bias: polar residues. Residues 2391–2431 (PAEAQPQTAQPSAQPQPQTQPQSPAQPEVQTQPEVQTQTTV) show a composition bias toward low complexity. Positions 2432 to 2485 (SSHVPSEAQPTHAQSSKPQVAAQSQPQSNVQGQSPVRVQSPSQTRIRPSTPSQL) are enriched in polar residues. Ser-2465 carries the phosphoserine modification. Residues 2486-2538 (SPGQQSQVQTTTSQPIPIQPHTSLQIPSQGQPQSQPQVQSSTQTLSSGQTLNQ) are compositionally biased toward low complexity. The stretch at 2706-2732 (DKIDKEEKQAAKKRKREESVEQKRSKQ) forms a coiled coil. The segment covering 2714–2729 (QAAKKRKREESVEQKR) has biased composition (basic and acidic residues). The segment covering 2795 to 2818 (PCPPVTPAPPAPPAPPPSPPPPPA) has biased composition (pro residues). The span at 2838 to 2847 (KREEEKDSSS) shows a compositional bias: basic and acidic residues. The segment at 2867 to 2918 (KLYCICKTPYDESKFYIGCDRCQNWYHGRCVGILQSEAELIDEYVCPQCQST) adopts a PHD-type 2 zinc-finger fold. The Bromo domain occupies 2927 to 3031 (PLTEKDYEGL…SFFVQKLKGF (105 aa)).

Belongs to the PBTF family. In terms of assembly, interacts with MAZ. Interacts with KEAP1. Component of the NURF-1 ISWI chromatin remodeling complex (also called the nucleosome-remodeling factor (NURF) complex) at least composed of SMARCA1 (isoform 2), BPTF, RBBP4 and RBBP7. Within the complex interacts with isoform 2 of SMARCA1. Component of the BPFT-SMARCA1 complex at least composed of SMARCA1 (isoform 1), BPFT, RBBP4 and RBBP7; the complex is catalytically inactive and does not remodel chromatin. Within the complex interacts with isoform 1 of SMARCA1. Component of the NURF-5 ISWI chromatin remodeling complex at least composed of SMARCA5/SNF2H and BPTF. Within NURF-5 ISWI chromatin remodeling complex interacts with SMARCA5/SNF2H. In terms of processing, phosphorylation enhances DNA-binding. Post-translationally, highly susceptible to proteolysis. In terms of tissue distribution, ubiquitously expressed, with highest levels in testis. Present in kidney, liver and brain. In the brain, highest levels are found in motor cortex (at protein level).

It localises to the cytoplasm. It is found in the nucleus. In terms of biological role, regulatory subunit of the ATP-dependent NURF-1 and NURF-5 ISWI chromatin remodeling complexes, which form ordered nucleosome arrays on chromatin and facilitate access to DNA during DNA-templated processes such as DNA replication, transcription, and repair. The NURF-1 ISWI chromatin remodeling complex has a lower ATP hydrolysis rate than the NURF-5 ISWI chromatin remodeling complex. Within the NURF-1 ISWI chromatin-remodeling complex, binds to the promoters of En1 and En2 to positively regulate their expression and promote brain development. Histone-binding protein which binds to H3 tails trimethylated on 'Lys-4' (H3K4me3), which mark transcription start sites of active genes. Binds to histone H3 tails dimethylated on 'Lys-4' (H3K4Me2) to a lesser extent. May also regulate transcription through direct binding to DNA or transcription factors. The sequence is that of Nucleosome-remodeling factor subunit BPTF (BPTF) from Homo sapiens (Human).